Here is a 70-residue protein sequence, read N- to C-terminus: Conotoxin AbVIC (70 aa).

Residues V1–A17 form the signal peptide. Positions E18–R41 are excised as a propeptide. Residues T19–R41 are disordered. Disulfide bonds link C43–C57, C50–C61, and C56–C68.

This sequence belongs to the conotoxin O1 superfamily. Expressed by the venom duct.

It is found in the secreted. The sequence is that of Conotoxin AbVIC from Conus abbreviatus (Abbreviated cone).